Consider the following 524-residue polypeptide: GMP synthase [glutamine-hydrolyzing] (524 aa).

In terms of domain architecture, Glutamine amidotransferase type-1 spans 9 to 207 (RILILDFGSQ…VIHICQCIPN (199 aa)). The active-site Nucleophile is Cys86. Active-site residues include His181 and Glu183. The GMPS ATP-PPase domain maps to 208–399 (WTTKHIIEDS…LGLPADLIYR (192 aa)). 235 to 241 (SGGVDSA) serves as a coordination point for ATP.

As to quaternary structure, homodimer.

The catalysed reaction is XMP + L-glutamine + ATP + H2O = GMP + L-glutamate + AMP + diphosphate + 2 H(+). Its pathway is purine metabolism; GMP biosynthesis; GMP from XMP (L-Gln route): step 1/1. Functionally, catalyzes the synthesis of GMP from XMP. This is GMP synthase [glutamine-hydrolyzing] from Coxiella burnetii (strain RSA 331 / Henzerling II).